Consider the following 256-residue polypeptide: uncharacterized protein (256 aa).

Positions 1–24 (MIKRVNKLVLGISLLFLVISITAG) are cleaved as a signal peptide. A lipid anchor (N-palmitoyl cysteine) is attached at Cys25. The S-diacylglycerol cysteine moiety is linked to residue Cys25.

It belongs to the staphylococcal tandem lipoprotein family.

It localises to the cell membrane. This is an uncharacterized protein from Staphylococcus aureus (strain NCTC 8325 / PS 47).